The primary structure comprises 104 residues: Turripeptide OL55-like (104 aa).

In terms of processing, contains 8 disulfide bonds. As to expression, expressed by the venom duct.

It is found in the secreted. Functionally, acts as a neurotoxin by inhibiting an ion channel. The sequence is that of Turripeptide OL55-like from Iotyrris cingulifera (Sea snail).